The primary structure comprises 392 residues: Ceramide synthase 5 (392 aa).

The Lumenal portion of the chain corresponds to 1 to 46 (MATAAQGPLSLLWGWLWSERFWLPENVSWADLEGPADGYGYPRGRH). N26 is a glycosylation site (N-linked (GlcNAc...) asparagine). Residues 47–67 (ILSVFPLAAGIFFVRLLFERF) traverse the membrane as a helical segment. The homeobox-like stretch occupies residues 75-136 (CIGIEDSGPY…RHRRNQDKPP (62 aa)). A TLC domain is found at 139–340 (TKFCESMWRF…IARIALKALI (202 aa)). Transmembrane regions (helical) follow at residues 148-168 (FTFY…SPWF), 183-203 (LSSG…SLMF), 214-234 (FLIM…SYIN), and 272-292 (LFVI…PFWI). The Last loop motif motif lies at 299 to 309 (ESWEIIGPYAS). A helical membrane pass occupies residues 311 to 331 (WLLNGLLLTLQLLHVIWSYLI). Over 332–392 (ARIALKALIR…HMGGSYWAEE (61 aa)) the chain is Cytoplasmic. A disordered region spans residues 349-392 (RSDVESSSEEEDVTTCTKSPCDSSSSNGANRVNGHMGGSYWAEE). The span at 362 to 378 (TTCTKSPCDSSSSNGAN) shows a compositional bias: polar residues.

Interacts with PAQR4; the interaction regulates the stability and activity of CERS5 and is inhibited in presence of ceramides. In terms of processing, phosphorylated at the C-terminus by CK2.

The protein localises to the endoplasmic reticulum membrane. The enzyme catalyses a sphingoid base + hexadecanoyl-CoA = an N-hexadecanoyl-sphingoid base + CoA + H(+). It carries out the reaction sphinganine + hexadecanoyl-CoA = N-hexadecanoylsphinganine + CoA + H(+). The catalysed reaction is hexadecasphinganine + hexadecanoyl-CoA = N-hexadecanoylhexadecasphinganine + CoA + H(+). It catalyses the reaction sphing-4-enine + hexadecanoyl-CoA = N-hexadecanoylsphing-4-enine + CoA + H(+). The enzyme catalyses 2-hydroxyhexadecanoyl-CoA + sphinganine = N-(2-hydroxyhexadecanoyl)-sphinganine + CoA + H(+). It carries out the reaction sphinganine + tetradecanoyl-CoA = N-(tetradecanoyl)-sphinganine + CoA + H(+). The catalysed reaction is sphinganine + octadecanoyl-CoA = N-(octadecanoyl)-sphinganine + CoA + H(+). It catalyses the reaction sphinganine + (9Z)-octadecenoyl-CoA = N-(9Z-octadecenoyl)-sphinganine + CoA + H(+). The enzyme catalyses a fatty acyl-CoA + sphing-4-enine = an N-acylsphing-4-enine + CoA + H(+). Its pathway is lipid metabolism; sphingolipid metabolism. With respect to regulation, inhibited by fumonisin B1. Functionally, ceramide synthase that catalyzes the transfer of the acyl chain from acyl-CoA to a sphingoid base, with high selectivity toward palmitoyl-CoA (hexadecanoyl-CoA; C16:0-CoA). Can use other acyl donors, but with less efficiency. N-acylates sphinganine and sphingosine bases to form dihydroceramides and ceramides in de novo synthesis and salvage pathways, respectively. Plays a role in de novo ceramide synthesis and surfactant homeostasis in pulmonary epithelia. This chain is Ceramide synthase 5, found in Homo sapiens (Human).